A 106-amino-acid chain; its full sequence is Neisseria hypothetical transcription factor (106 aa).

Residues 26-80 (MRLFRVNKGWSQEELARQCGLDRTYVSAVERKRWNIALSNIEKMAAALGVAAYQL) enclose the HTH cro/C1-type domain. The H-T-H motif DNA-binding region spans 37-56 (QEELARQCGLDRTYVSAVER).

In terms of assembly, homodimer. Can interact with the dimeric form of the DNA mimic protein DMP19 with 1:1 stoichiometry.

The protein resides in the cytoplasm. With respect to regulation, repressor activity is inhibited in the presence of the DNA mimic protein DMP19, which interacts with NHTF and prevents binding of NHTF to its DNA-binding sites. Its function is as follows. Transcriptional regulator probably involved in the response to nitrogen levels. Down-regulates its own expression as well as the expression of the downstream gene, glnD, which encodes the [Protein-PII] uridylyltransferase, a key enzyme in the nitrogen regulation system. Acts by binding to a specific palindromic DNA sequence (5'-TGTNANTNACA-3') in its 5'-untranslated region. This is Neisseria hypothetical transcription factor from Neisseria meningitidis serogroup B (strain ATCC BAA-335 / MC58).